Here is a 54-residue protein sequence, read N- to C-terminus: Ovomucoid (54 aa).

The region spanning 4–54 (VDCSDYPKPACLLEYMPLCGSDNKTYDNKCSFCNAVVDSNGTLSLSHFGKC) is the Kazal-like domain. Disulfide bonds link cysteine 6–cysteine 36, cysteine 14–cysteine 33, and cysteine 22–cysteine 54. The N-linked (GlcNAc...) asparagine glycan is linked to asparagine 43.

Its subcellular location is the secreted. This Opisthocomus hoazin (Hoatzin) protein is Ovomucoid.